The primary structure comprises 357 residues: Histidinol-phosphate aminotransferase 2 (357 aa).

At K216 the chain carries N6-(pyridoxal phosphate)lysine.

Belongs to the class-II pyridoxal-phosphate-dependent aminotransferase family. Histidinol-phosphate aminotransferase subfamily. Homodimer. The cofactor is pyridoxal 5'-phosphate.

The enzyme catalyses L-histidinol phosphate + 2-oxoglutarate = 3-(imidazol-4-yl)-2-oxopropyl phosphate + L-glutamate. It participates in amino-acid biosynthesis; L-histidine biosynthesis; L-histidine from 5-phospho-alpha-D-ribose 1-diphosphate: step 7/9. The sequence is that of Histidinol-phosphate aminotransferase 2 from Idiomarina loihiensis (strain ATCC BAA-735 / DSM 15497 / L2-TR).